The primary structure comprises 704 residues: MAVPTTAVEGVRSRGAPGEVIHLNVGGKRFSTSRQTLTWIPDSFFSSLLSGRISTLKDETGAIFIDRDPTVFAPILNFLRTKELDPRGVHGSSLLHEAQFYGLTPLVRRLQVREELDRSSCGNVLFNGYLPPPVFPVKRRNRHSLVGPQQIGGRPAPVRRSNTMPPNLGNAGLLGRMLDDRAPPSPSGQPEEPGMVRLVCGHHNWIAVAYTHFLVCYRLKEASGWQLAFSSPRLDWPIERLALTARVLGGAPGEHDKMVAAATGSEILLWALQAQGGGSEIGVFHLGVPVEALFFVGNQLIATSHTGRIGVWNAVTKHWQVQEVQPITSYDAAGSFLLLGCSNGSIYYVDVQKFPLRMKDNDLLVSELYRDPAEDGVTALSVYLTPKTSDSGNWIEIAYGTSSGVVRVIVQHPETVGSGPQLFQTFSVHRSPVTKIMLSEKHLISVCADNNHVRTWSVTRFRGMISTQPGSTPLASFKILALESADGLGGCSAGNDIGPYGERDDQQVFIQKVVPNASQLFVRLSSTGQRVCSVRSVDGSATTAFTVLECEGSRRLGSRPRRYLLTGQANGSLAMWDLTTAMDGLGQTPAGGLTEEELMDQLEQCELSPLTSSRASFPSPSPRTSLTSLHSASSNTSLCGHRGSPSPPQAGARSRGAGSFVDRFKELARGAPELRGPPTPAPRPSTSLGNPLILPKNTLNETSF.

At Ala-2 the chain carries N-acetylalanine. Residues Glu-19–Gly-88 form the BTB domain. The segment at Val-146–Pro-165 is disordered. Thr-163 carries the post-translational modification Phosphothreonine. WD repeat units follow at residues Arg-233–Glu-280, Val-283–Gln-322, Val-324–Lys-359, Val-428–Ser-466, and Leu-548–Gly-586. Residues Pro-609 to Phe-704 form a disordered region. The segment covering Thr-611 to Ser-631 has biased composition (low complexity). The short motif at Pro-618–Arg-623 is the PXXXPR element. Phosphoserine is present on residues Ser-644 and Ser-646. Positions Pro-678–Arg-683 match the PXXXPR motif.

This sequence belongs to the KCTD3 family. Monomer. Interacts with CUL3; interaction is direct and forms a 5:5 heterodecamer. Interacts (via PXXXPR motifs) with SH3KBP1 (via SH3 domains). Directly interacts with cathepsin B/CTSB.

Its subcellular location is the lysosome. Inhibits CBL-SH3KBP1 complex mediated down-regulation of EGFR signaling by sequestration of SH3KBP1. Binds to SH3KBP1 and prevents its interaction with CBL and inhibits translocation of SH3KBP1 to EGFR containing vesicles upon EGF stimulation. The polypeptide is SH3KBP1-binding protein 1 (Shkbp1) (Rattus norvegicus (Rat)).